The following is a 261-amino-acid chain: tRNA pseudouridine synthase A (261 aa).

Catalysis depends on Asp51, which acts as the Nucleophile. Tyr109 lines the substrate pocket.

The protein belongs to the tRNA pseudouridine synthase TruA family. In terms of assembly, homodimer.

The enzyme catalyses uridine(38/39/40) in tRNA = pseudouridine(38/39/40) in tRNA. In terms of biological role, formation of pseudouridine at positions 38, 39 and 40 in the anticodon stem and loop of transfer RNAs. The polypeptide is tRNA pseudouridine synthase A (Tolumonas auensis (strain DSM 9187 / NBRC 110442 / TA 4)).